Consider the following 184-residue polypeptide: RNA 2',3'-cyclic phosphodiesterase (184 aa).

The active-site Proton donor is His42. Short sequence motifs (HXTX) lie at residues His42–Leu45 and His127–Val130. Catalysis depends on His127, which acts as the Proton acceptor.

This sequence belongs to the 2H phosphoesterase superfamily. ThpR family.

It catalyses the reaction a 3'-end 2',3'-cyclophospho-ribonucleotide-RNA + H2O = a 3'-end 2'-phospho-ribonucleotide-RNA + H(+). Functionally, hydrolyzes RNA 2',3'-cyclic phosphodiester to an RNA 2'-phosphomonoester. This is RNA 2',3'-cyclic phosphodiesterase from Methanothermobacter thermautotrophicus (strain ATCC 29096 / DSM 1053 / JCM 10044 / NBRC 100330 / Delta H) (Methanobacterium thermoautotrophicum).